Reading from the N-terminus, the 433-residue chain is N-lysine methyltransferase SMYD2 (433 aa).

The 235-residue stretch at 7–241 (GGLERFCSAG…PGDEVFTSYI (235 aa)) folds into the SET domain. Position 17 to 19 (17 to 19 (KGR)) interacts with S-adenosyl-L-methionine. Positions 52, 55, 65, 68, 74, 78, 86, and 90 each coordinate Zn(2+). The MYND-type zinc-finger motif lies at 52 to 90 (CECCFARKEGLSKCGRCKQAFYCDVECQKEDWPLHKLEC). S-adenosyl-L-methionine is bound by residues His-137, 206–207 (NH), and 258–260 (YFF). Ser-283 carries the phosphoserine modification.

This sequence belongs to the class V-like SAM-binding methyltransferase superfamily. Interacts with RNA polymerase II and HELZ. Interacts with SIN3A and HDAC1. Interacts (via MYND-type zinc finger) with EPB41L3. Interacts (via SET domain) with p53/TP53. Interacts with RB1 and HSP90AA1.

The protein localises to the cytoplasm. It localises to the cytosol. It is found in the nucleus. It catalyses the reaction L-lysyl(4)-[histone H3] + 3 S-adenosyl-L-methionine = N(6),N(6),N(6)-trimethyl-L-lysyl(4)-[histone H3] + 3 S-adenosyl-L-homocysteine + 3 H(+). The catalysed reaction is L-lysyl-[protein] + S-adenosyl-L-methionine = N(6)-methyl-L-lysyl-[protein] + S-adenosyl-L-homocysteine + H(+). Its function is as follows. Protein-lysine N-methyltransferase that methylates both histones and non-histone proteins, including p53/TP53 and RB1. Specifically trimethylates histone H3 'Lys-4' (H3K4me3) in vivo. The activity requires interaction with HSP90alpha. Shows even higher methyltransferase activity on p53/TP53. Monomethylates 'Lys-370' of p53/TP53, leading to decreased DNA-binding activity and subsequent transcriptional regulation activity of p53/TP53. Monomethylates RB1 at 'Lys-860'. In Rattus norvegicus (Rat), this protein is N-lysine methyltransferase SMYD2 (Smyd2).